A 257-amino-acid chain; its full sequence is MPLHRYPVHLWQKLRLRQGICARLPAHFLRSLEEERTPTPVHYKPHGTKFKINPKNGQRERVEDVPIPVHYPPESQQGLWGGEGLILGYRYANNDKLSKRVKKVWKPQLFTRELYSEILDKKFTVTVTMRTLDLIDEAYGFDFYILKTPKEDLGSKFGMDLKRGMLLRLARQDPHLHPENPERRAAIYDKYRSFVIPEAEAEWVGLTLEEALEKQRLLEEKDPVPLFKVYVEELVQRLQEQVLSRPAVVQKRAGDHA.

The N-terminal 55 residues, 1 to 55, are a transit peptide targeting the mitochondrion; the sequence is MPLHRYPVHLWQKLRLRQGICARLPAHFLRSLEEERTPTPVHYKPHGTKFKINPK.

Belongs to the bacterial ribosomal protein bL28 family. In terms of assembly, component of the mitochondrial ribosome large subunit (39S) which comprises a 16S rRNA and about 50 distinct proteins. Interacts with OXA1L.

The protein resides in the mitochondrion. The chain is Large ribosomal subunit protein bL28m (Mrpl28) from Mus musculus (Mouse).